A 440-amino-acid chain; its full sequence is Enolase (440 aa).

Glutamine 168 lines the (2R)-2-phosphoglycerate pocket. The Proton donor role is filled by glutamate 210. The Mg(2+) site is built by aspartate 249, glutamate 300, and aspartate 326. 4 residues coordinate (2R)-2-phosphoglycerate: lysine 351, arginine 380, serine 381, and lysine 402. Lysine 351 functions as the Proton acceptor in the catalytic mechanism.

This sequence belongs to the enolase family. It depends on Mg(2+) as a cofactor.

Its subcellular location is the cytoplasm. The protein resides in the secreted. It localises to the cell surface. It catalyses the reaction (2R)-2-phosphoglycerate = phosphoenolpyruvate + H2O. It participates in carbohydrate degradation; glycolysis; pyruvate from D-glyceraldehyde 3-phosphate: step 4/5. Catalyzes the reversible conversion of 2-phosphoglycerate (2-PG) into phosphoenolpyruvate (PEP). It is essential for the degradation of carbohydrates via glycolysis. The protein is Enolase of Ureaplasma parvum serovar 3 (strain ATCC 27815 / 27 / NCTC 11736).